The sequence spans 323 residues: Annexin A3 (323 aa).

An N-acetylalanine modification is found at A2. 4 Annexin repeats span residues 18 to 89, 90 to 161, 173 to 245, and 249 to 320; these read FSPS…ALVT, PPAV…TLAD, HLAK…AIVN, and NTPA…KICG. T267 is subject to Phosphothreonine.

The protein belongs to the annexin family.

Its function is as follows. Inhibitor of phospholipase A2, also possesses anti-coagulant properties. Also cleaves the cyclic bond of inositol 1,2-cyclic phosphate to form inositol 1-phosphate. The polypeptide is Annexin A3 (ANXA3) (Homo sapiens (Human)).